The following is a 251-amino-acid chain: Insulin-induced gene 1 protein (251 aa).

The Cytoplasmic segment spans residues 1-58 (MQTLEEHCWSCSCTRGRDKKGTKVSAWLARRVGKAMSSLNSLLSLAYSTLASSEGRSL). A helical transmembrane segment spans residues 59–81 (IQRSLVLFTVGVFLALVLNLLQI). Topologically, residues 82 to 100 (QRNVTLFPEEVIATIFSSA) are extracellular. Residues 101–118 (WWVPPCCGTAAAVVGLLY) traverse the membrane as a helical segment. Topologically, residues 119-133 (PCIDSRIGEPHKFKR) are cytoplasmic. The chain crosses the membrane as a helical span at residues 134-156 (EWASVMRCIAVFVGINHASAKLD). Topologically, residues 157–159 (FAN) are extracellular. The chain crosses the membrane as a helical span at residues 160–178 (NVQLSLTLAALSLGLWWTF). The Cytoplasmic segment spans residues 179–183 (DRSRS). The helical transmembrane segment at 184-205 (GLGLGITIAFLATLITQFLVYN) threads the bilayer. Topologically, residues 206 to 219 (GVYQYTSPDFLYIR) are extracellular. Residues 220–237 (SWLPCIFFSGGVTVGNIG) traverse the membrane as a helical segment. The Cytoplasmic segment spans residues 238-251 (RQLAMGSSEKTHGD). The KxHxx motif lies at 245–251 (SEKTHGD).

This sequence belongs to the INSIG family. As to quaternary structure, interacts with scap; interaction is direct and only takes place in the presence of sterols; it prevents interaction between scap and the coat protein complex II (COPII). Associates with the SCAP-SREBP complex; association is mediated via its interaction with scap and only takes place in the presence of sterols.

The protein resides in the endoplasmic reticulum membrane. Functionally, oxysterol-binding protein that mediates feedback control of cholesterol synthesis by controlling both endoplasmic reticulum to Golgi transport of scap and degradation of hmgcr. Acts as a negative regulator of cholesterol biosynthesis by mediating the retention of the SCAP-SREBP complex in the endoplasmic reticulum, thereby blocking the processing of sterol regulatory element-binding proteins (SREBPs). Binds oxysterol, including 25-hydroxycholesterol, regulating interaction with scap and retention of the SCAP-SREBP complex in the endoplasmic reticulum. In presence of oxysterol, interacts with scap, retaining the SCAP-SREBP complex in the endoplasmic reticulum, thereby preventing scap from escorting SREBPs to the Golgi. Sterol deprivation reduces oxysterol-binding, disrupting the interaction between insig1 and scap, thereby promoting Golgi transport of the SCAP-SREBP complex, followed by processing and nuclear translocation of SREBPs. Also regulates cholesterol synthesis by regulating degradation of hmgcr. This Xenopus laevis (African clawed frog) protein is Insulin-induced gene 1 protein.